Reading from the N-terminus, the 217-residue chain is Adenylate kinase (217 aa).

10–15 is an ATP binding site; the sequence is GAGKGT. Residues 30 to 59 form an NMP region; it reads STGDMLRAAVKAGTPLGVEAKKVMDAGGLV. Residues T31, R36, 57 to 59, 85 to 88, and Q92 each bind AMP; these read GLV and GFPR. Residues 122–159 form an LID region; it reads GRRAHLASGRTYHVKYNPPKVAGKDDLTGEDLVQRDDD. Residues R123 and 132 to 133 each bind ATP; that span reads TY. Positions 156 and 167 each coordinate AMP. G203 contacts ATP.

The protein belongs to the adenylate kinase family. As to quaternary structure, monomer.

Its subcellular location is the cytoplasm. It carries out the reaction AMP + ATP = 2 ADP. It participates in purine metabolism; AMP biosynthesis via salvage pathway; AMP from ADP: step 1/1. In terms of biological role, catalyzes the reversible transfer of the terminal phosphate group between ATP and AMP. Plays an important role in cellular energy homeostasis and in adenine nucleotide metabolism. The chain is Adenylate kinase from Aromatoleum aromaticum (strain DSM 19018 / LMG 30748 / EbN1) (Azoarcus sp. (strain EbN1)).